Reading from the N-terminus, the 359-residue chain is 3-dehydroquinate synthase (359 aa).

Residues D69 to K74, G103 to D107, T127 to T128, K140, K149, and T167 to T170 contribute to the NAD(+) site. Zn(2+) contacts are provided by E182, H245, and H262.

The protein belongs to the sugar phosphate cyclases superfamily. Dehydroquinate synthase family. Co(2+) is required as a cofactor. The cofactor is Zn(2+). It depends on NAD(+) as a cofactor.

It localises to the cytoplasm. The catalysed reaction is 7-phospho-2-dehydro-3-deoxy-D-arabino-heptonate = 3-dehydroquinate + phosphate. It functions in the pathway metabolic intermediate biosynthesis; chorismate biosynthesis; chorismate from D-erythrose 4-phosphate and phosphoenolpyruvate: step 2/7. Functionally, catalyzes the conversion of 3-deoxy-D-arabino-heptulosonate 7-phosphate (DAHP) to dehydroquinate (DHQ). This is 3-dehydroquinate synthase from Methylococcus capsulatus (strain ATCC 33009 / NCIMB 11132 / Bath).